Reading from the N-terminus, the 178-residue chain is Deoxyuridine 5'-triphosphate nucleotidohydrolase (178 aa).

The protein belongs to the dUTPase family. It depends on Mg(2+) as a cofactor.

It carries out the reaction dUTP + H2O = dUMP + diphosphate + H(+). The protein operates within pyrimidine metabolism; dUMP biosynthesis; dUMP from dCTP (dUTP route): step 2/2. This enzyme is involved in nucleotide metabolism: it produces dUMP, the immediate precursor of thymidine nucleotides and it decreases the intracellular concentration of dUTP so that uracil cannot be incorporated into DNA. The polypeptide is Deoxyuridine 5'-triphosphate nucleotidohydrolase (Fowl adenovirus A serotype 1 (strain CELO / Phelps) (FAdV-1)).